The following is a 311-amino-acid chain: Methenyltetrahydromethanopterin cyclohydrolase (311 aa).

It belongs to the MCH family.

It is found in the cytoplasm. It carries out the reaction 5,10-methenyl-5,6,7,8-tetrahydromethanopterin + H2O = N(5)-formyl-5,6,7,8-tetrahydromethanopterin + H(+). Catalyzes the hydrolysis of methenyl-H(4)MPT(+) to 5-formyl-H(4)MPT. The polypeptide is Methenyltetrahydromethanopterin cyclohydrolase (Halobacterium salinarum (strain ATCC 29341 / DSM 671 / R1)).